The primary structure comprises 145 residues: Putative pre-16S rRNA nuclease (145 aa).

Belongs to the YqgF nuclease family.

The protein resides in the cytoplasm. Functionally, could be a nuclease involved in processing of the 5'-end of pre-16S rRNA. The sequence is that of Putative pre-16S rRNA nuclease from Prochlorococcus marinus (strain MIT 9211).